The following is a 261-amino-acid chain: CD40 ligand (261 aa).

Topologically, residues Met-1 to Lys-22 are cytoplasmic. A helical; Signal-anchor for type II membrane protein transmembrane segment spans residues Ile-23 to Leu-46. Topologically, residues His-47–Leu-261 are extracellular. One can recognise a THD domain in the interval Ile-122–Leu-261. Cys-178 and Cys-218 form a disulfide bridge. An N-linked (GlcNAc...) asparagine glycan is attached at Asn-240.

It belongs to the tumor necrosis factor family. In terms of assembly, homotrimer. Interacts with CD28. CD40 ligand, soluble form: Exists as either a monomer or a homotrimer. Forms a ternary complex between CD40 and integrins for CD40-CD40LG signaling. Post-translationally, the soluble form derives from the membrane form by proteolytic processing.

It is found in the cell membrane. The protein resides in the cell surface. The protein localises to the secreted. Its function is as follows. Cytokine that acts as a ligand to CD40/TNFRSF5. Costimulates T-cell proliferation and cytokine production. Its cross-linking on T-cells generates a costimulatory signal which enhances the production of IL4 and IL10 in conjunction with the TCR/CD3 ligation and CD28 costimulation. Induces the activation of NF-kappa-B. Induces the activation of kinases MAPK8 and PAK2 in T-cells. Mediates B-cell proliferation in the absence of co-stimulus as well as IgE production in the presence of IL4. Involved in immunoglobulin class switching. Functionally, acts as a ligand for integrins, specifically ITGA5:ITGB1 and ITGAV:ITGB3; both integrins and the CD40 receptor are required for activation of CD40-CD40LG signaling, which have cell-type dependent effects, such as B-cell activation, NF-kappa-B signaling and anti-apoptotic signaling. The chain is CD40 ligand (CD40LG) from Bos taurus (Bovine).